The chain runs to 182 residues: dCTP deaminase, dUMP-forming (182 aa).

DCTP is bound by residues 96 to 101 (RSSIGR), Asp-113, 121 to 123 (TLE), Gln-142, Tyr-156, and Gln-163. The active-site Proton donor/acceptor is the Glu-123.

Belongs to the dCTP deaminase family. As to quaternary structure, homotrimer.

It catalyses the reaction dCTP + 2 H2O = dUMP + NH4(+) + diphosphate. It functions in the pathway pyrimidine metabolism; dUMP biosynthesis; dUMP from dCTP: step 1/1. In terms of biological role, bifunctional enzyme that catalyzes both the deamination of dCTP to dUTP and the hydrolysis of dUTP to dUMP without releasing the toxic dUTP intermediate. This Halothermothrix orenii (strain H 168 / OCM 544 / DSM 9562) protein is dCTP deaminase, dUMP-forming.